We begin with the raw amino-acid sequence, 182 residues long: Endoribonuclease YbeY (182 aa).

Positions 120, 124, and 130 each coordinate Zn(2+). Positions 157-182 (RGVSFAPKPTGAGAFPSAADRDDTQN) are disordered.

It belongs to the endoribonuclease YbeY family. Zn(2+) serves as cofactor.

The protein localises to the cytoplasm. Its function is as follows. Single strand-specific metallo-endoribonuclease involved in late-stage 70S ribosome quality control and in maturation of the 3' terminus of the 16S rRNA. The polypeptide is Endoribonuclease YbeY (Corynebacterium jeikeium (strain K411)).